Reading from the N-terminus, the 376-residue chain is MMYSRFRTVAGNLNCAAKRLSSSSTTTTTTSAPSELQQNLAALRARLAMESPSLSDFISLKSDNAYSVEVGTKKKPLPKPKWMKESIPGGEKYVQIKKKLRELKLHTVCEEAKCPNLGECWSGGETGTATATIMILGDTCTRGCRFCNVKTSRTPPPPDPDEPTNVAEAIASWGLDYVVITSVDRDDLPDQGSGHFTETVQKLKALKPSMLIEALVPDFRGNAECVEKVSKSGLDVFAHNIETVEELQSAVRDHRANFKQSLDVLMMAKEYAPAGTLTKTSIMLGCGETPDQIVKTMEKVRAAGVDVMTFGQHMRPSKRHMPVSEYITPEAFEKYQTLGMEMGFRYVASGPMVRSSYKAGEFYIKSMIDSDRAASS.

[4Fe-4S] cluster-binding residues include cysteine 109, cysteine 114, cysteine 120, cysteine 140, cysteine 144, cysteine 147, and serine 356. The region spanning 125–345 is the Radical SAM core domain; sequence ETGTATATIM…QTLGMEMGFR (221 aa).

This sequence belongs to the radical SAM superfamily. Lipoyl synthase family. Requires [4Fe-4S] cluster as cofactor.

It localises to the mitochondrion. It carries out the reaction [[Fe-S] cluster scaffold protein carrying a second [4Fe-4S](2+) cluster] + N(6)-octanoyl-L-lysyl-[protein] + 2 oxidized [2Fe-2S]-[ferredoxin] + 2 S-adenosyl-L-methionine + 4 H(+) = [[Fe-S] cluster scaffold protein] + N(6)-[(R)-dihydrolipoyl]-L-lysyl-[protein] + 4 Fe(3+) + 2 hydrogen sulfide + 2 5'-deoxyadenosine + 2 L-methionine + 2 reduced [2Fe-2S]-[ferredoxin]. It participates in protein modification; protein lipoylation via endogenous pathway; protein N(6)-(lipoyl)lysine from octanoyl-[acyl-carrier-protein]: step 2/2. Catalyzes the radical-mediated insertion of two sulfur atoms into the C-6 and C-8 positions of the octanoyl moiety bound to the lipoyl domains of lipoate-dependent enzymes, thereby converting the octanoylated domains into lipoylated derivatives. The chain is Lipoyl synthase 2, mitochondrial from Pisum sativum (Garden pea).